Here is a 632-residue protein sequence, read N- to C-terminus: tRNA uridine 5-carboxymethylaminomethyl modification enzyme MnmG (632 aa).

FAD is bound by residues 13-18, Val-125, and Ser-180; that span reads GGGHAG. 273-287 provides a ligand contact to NAD(+); the sequence is GPRYCPSIEDKVMRF. Position 370 (Gln-370) interacts with FAD.

This sequence belongs to the MnmG family. Homodimer. Heterotetramer of two MnmE and two MnmG subunits. FAD is required as a cofactor.

It localises to the cytoplasm. In terms of biological role, NAD-binding protein involved in the addition of a carboxymethylaminomethyl (cmnm) group at the wobble position (U34) of certain tRNAs, forming tRNA-cmnm(5)s(2)U34. This chain is tRNA uridine 5-carboxymethylaminomethyl modification enzyme MnmG, found in Vibrio vulnificus (strain CMCP6).